Reading from the N-terminus, the 76-residue chain is Small ribosomal subunit protein bS18 (76 aa).

Belongs to the bacterial ribosomal protein bS18 family. As to quaternary structure, part of the 30S ribosomal subunit. Forms a tight heterodimer with protein bS6.

In terms of biological role, binds as a heterodimer with protein bS6 to the central domain of the 16S rRNA, where it helps stabilize the platform of the 30S subunit. This is Small ribosomal subunit protein bS18 from Oceanobacillus iheyensis (strain DSM 14371 / CIP 107618 / JCM 11309 / KCTC 3954 / HTE831).